The following is a 355-amino-acid chain: Elongation factor Ts (355 aa).

An involved in Mg(2+) ion dislocation from EF-Tu region spans residues 82-85; sequence TDFV.

The protein belongs to the EF-Ts family.

It localises to the cytoplasm. Associates with the EF-Tu.GDP complex and induces the exchange of GDP to GTP. It remains bound to the aminoacyl-tRNA.EF-Tu.GTP complex up to the GTP hydrolysis stage on the ribosome. The polypeptide is Elongation factor Ts (Helicobacter pylori (strain G27)).